A 208-amino-acid chain; its full sequence is A-type ATP synthase subunit E (208 aa).

This sequence belongs to the V-ATPase E subunit family. Has multiple subunits with at least A(3), B(3), C, D, E, F, H, I and proteolipid K(x).

It localises to the cell membrane. Its function is as follows. Component of the A-type ATP synthase that produces ATP from ADP in the presence of a proton gradient across the membrane. The sequence is that of A-type ATP synthase subunit E from Ignicoccus hospitalis (strain KIN4/I / DSM 18386 / JCM 14125).